Here is a 248-residue protein sequence, read N- to C-terminus: 2,3-bisphosphoglycerate-dependent phosphoglycerate mutase (248 aa).

Residues 8–15, 21–22, Arg-60, 87–90, Lys-98, 114–115, and 183–184 each bind substrate; these read RHGESEWN, TG, ERHY, RR, and GN. The active-site Tele-phosphohistidine intermediate is His-9. The active-site Proton donor/acceptor is Glu-87.

This sequence belongs to the phosphoglycerate mutase family. BPG-dependent PGAM subfamily.

The enzyme catalyses (2R)-2-phosphoglycerate = (2R)-3-phosphoglycerate. The protein operates within carbohydrate degradation; glycolysis; pyruvate from D-glyceraldehyde 3-phosphate: step 3/5. Functionally, catalyzes the interconversion of 2-phosphoglycerate and 3-phosphoglycerate. The chain is 2,3-bisphosphoglycerate-dependent phosphoglycerate mutase from Borrelia garinii subsp. bavariensis (strain ATCC BAA-2496 / DSM 23469 / PBi) (Borreliella bavariensis).